The chain runs to 30 residues: NADH-ubiquinone oxidoreductase 18 kDa subunit (30 aa).

Complex I is composed of about 45 different subunits.

The protein localises to the mitochondrion inner membrane. It carries out the reaction a ubiquinone + NADH + 5 H(+)(in) = a ubiquinol + NAD(+) + 4 H(+)(out). Functionally, transfer of electrons from NADH to the respiratory chain. The immediate electron acceptor for the enzyme is believed to be ubiquinone. This chain is NADH-ubiquinone oxidoreductase 18 kDa subunit, found in Solanum tuberosum (Potato).